The sequence spans 138 residues: Large ribosomal subunit protein uL14 (138 aa).

It belongs to the universal ribosomal protein uL14 family. In terms of assembly, part of the 50S ribosomal subunit. Forms a cluster with proteins L3 and L24e, part of which may contact the 16S rRNA in 2 intersubunit bridges.

Binds to 23S rRNA. Forms part of two intersubunit bridges in the 70S ribosome. The protein is Large ribosomal subunit protein uL14 of Hyperthermus butylicus (strain DSM 5456 / JCM 9403 / PLM1-5).